Reading from the N-terminus, the 124-residue chain is Large ribosomal subunit protein uL22 (124 aa).

It belongs to the universal ribosomal protein uL22 family. In terms of assembly, part of the 50S ribosomal subunit.

This protein binds specifically to 23S rRNA; its binding is stimulated by other ribosomal proteins, e.g. L4, L17, and L20. It is important during the early stages of 50S assembly. It makes multiple contacts with different domains of the 23S rRNA in the assembled 50S subunit and ribosome. In terms of biological role, the globular domain of the protein is located near the polypeptide exit tunnel on the outside of the subunit, while an extended beta-hairpin is found that lines the wall of the exit tunnel in the center of the 70S ribosome. This Treponema pallidum (strain Nichols) protein is Large ribosomal subunit protein uL22.